The chain runs to 354 residues: Cyclin-D1-2 (354 aa).

Disordered regions lie at residues 37–74 (FFQQ…EEEE) and 331–354 (TTAT…RRKM). Composition is skewed to low complexity over residues 44–66 (PAPA…AGSC) and 331–346 (TTAT…VSSS).

This sequence belongs to the cyclin family. Cyclin D subfamily.

The chain is Cyclin-D1-2 (CYCD1-2) from Oryza sativa subsp. japonica (Rice).